The following is a 179-amino-acid chain: Large ribosomal subunit protein uL6 (179 aa).

The protein belongs to the universal ribosomal protein uL6 family. As to quaternary structure, part of the 50S ribosomal subunit.

In terms of biological role, this protein binds to the 23S rRNA, and is important in its secondary structure. It is located near the subunit interface in the base of the L7/L12 stalk, and near the tRNA binding site of the peptidyltransferase center. This Geotalea daltonii (strain DSM 22248 / JCM 15807 / FRC-32) (Geobacter daltonii) protein is Large ribosomal subunit protein uL6.